A 63-amino-acid polypeptide reads, in one-letter code: Large ribosomal subunit protein uL30 (63 aa).

The protein belongs to the universal ribosomal protein uL30 family. In terms of assembly, part of the 50S ribosomal subunit.

The chain is Large ribosomal subunit protein uL30 from Hahella chejuensis (strain KCTC 2396).